The following is a 314-amino-acid chain: DNA-directed RNA polymerase subunit alpha (314 aa).

Residues 1-228 (MIEIEKPVIE…EHLNIFVGLT (228 aa)) are alpha N-terminal domain (alpha-NTD). The segment at 245–314 (KEKVLEMTIE…ELGLGLRKEE (70 aa)) is alpha C-terminal domain (alpha-CTD).

It belongs to the RNA polymerase alpha chain family. Homodimer. The RNAP catalytic core consists of 2 alpha, 1 beta, 1 beta' and 1 omega subunit. When a sigma factor is associated with the core the holoenzyme is formed, which can initiate transcription.

It carries out the reaction RNA(n) + a ribonucleoside 5'-triphosphate = RNA(n+1) + diphosphate. Functionally, DNA-dependent RNA polymerase catalyzes the transcription of DNA into RNA using the four ribonucleoside triphosphates as substrates. This chain is DNA-directed RNA polymerase subunit alpha, found in Halalkalibacterium halodurans (strain ATCC BAA-125 / DSM 18197 / FERM 7344 / JCM 9153 / C-125) (Bacillus halodurans).